A 102-amino-acid chain; its full sequence is NADH-quinone oxidoreductase subunit K (102 aa).

The next 3 helical transmembrane spans lie at 5–25 (LSHYLTVSAILFTLGVFGIFL), 31–51 (IVILMSVELILLAVNINMVAF), and 65–85 (LFILTVAAAEAAIGLAILVVF).

It belongs to the complex I subunit 4L family. As to quaternary structure, NDH-1 is composed of 14 different subunits. Subunits NuoA, H, J, K, L, M, N constitute the membrane sector of the complex.

It is found in the cell inner membrane. The catalysed reaction is a quinone + NADH + 5 H(+)(in) = a quinol + NAD(+) + 4 H(+)(out). In terms of biological role, NDH-1 shuttles electrons from NADH, via FMN and iron-sulfur (Fe-S) centers, to quinones in the respiratory chain. The immediate electron acceptor for the enzyme in this species is believed to be ubiquinone. Couples the redox reaction to proton translocation (for every two electrons transferred, four hydrogen ions are translocated across the cytoplasmic membrane), and thus conserves the redox energy in a proton gradient. This is NADH-quinone oxidoreductase subunit K from Rhizobium leguminosarum bv. trifolii (strain WSM2304).